Here is a 160-residue protein sequence, read N- to C-terminus: Peptide deformylase 1 (160 aa).

Residues cysteine 90 and histidine 132 each contribute to the Fe cation site. Residue glutamate 133 is part of the active site. Histidine 136 provides a ligand contact to Fe cation.

Belongs to the polypeptide deformylase family. The cofactor is Fe(2+).

It catalyses the reaction N-terminal N-formyl-L-methionyl-[peptide] + H2O = N-terminal L-methionyl-[peptide] + formate. Functionally, removes the formyl group from the N-terminal Met of newly synthesized proteins. Requires at least a dipeptide for an efficient rate of reaction. N-terminal L-methionine is a prerequisite for activity but the enzyme has broad specificity at other positions. This chain is Peptide deformylase 1 (defA), found in Bacillus subtilis (strain 168).